Reading from the N-terminus, the 156-residue chain is NAD(P)H-quinone oxidoreductase subunit N (156 aa).

Belongs to the complex I NdhN subunit family. NDH-1 can be composed of about 15 different subunits; different subcomplexes with different compositions have been identified which probably have different functions.

The protein localises to the cellular thylakoid membrane. The catalysed reaction is a plastoquinone + NADH + (n+1) H(+)(in) = a plastoquinol + NAD(+) + n H(+)(out). The enzyme catalyses a plastoquinone + NADPH + (n+1) H(+)(in) = a plastoquinol + NADP(+) + n H(+)(out). NDH-1 shuttles electrons from an unknown electron donor, via FMN and iron-sulfur (Fe-S) centers, to quinones in the respiratory and/or the photosynthetic chain. The immediate electron acceptor for the enzyme in this species is believed to be plastoquinone. Couples the redox reaction to proton translocation, and thus conserves the redox energy in a proton gradient. Cyanobacterial NDH-1 also plays a role in inorganic carbon-concentration. The polypeptide is NAD(P)H-quinone oxidoreductase subunit N (Prochlorococcus marinus (strain MIT 9515)).